Reading from the N-terminus, the 193-residue chain is Inosine triphosphate pyrophosphatase (193 aa).

ITP is bound at residue 10-15; that stretch reads TGNANK. Glu-42 contacts Mg(2+). Residues Lys-54, 70-71, Lys-87, 146-149, Lys-169, and 174-175 contribute to the ITP site; these read DT, FGWD, and HR.

The protein belongs to the HAM1 NTPase family. As to quaternary structure, homodimer. Mg(2+) is required as a cofactor. Mn(2+) serves as cofactor.

The protein localises to the cytoplasm. It is found in the nucleus. It carries out the reaction ITP + H2O = IMP + diphosphate + H(+). The catalysed reaction is dITP + H2O = dIMP + diphosphate + H(+). It catalyses the reaction XTP + H2O = XMP + diphosphate + H(+). Pyrophosphatase that hydrolyzes non-canonical purine nucleotides such as inosine triphosphate (ITP), deoxyinosine triphosphate (dITP) or xanthosine 5'-triphosphate (XTP) to their respective monophosphate derivatives. The enzyme does not distinguish between the deoxy- and ribose forms. Probably excludes non-canonical purines from RNA and DNA precursor pools, thus preventing their incorporation into RNA and DNA and avoiding chromosomal lesions. In Mycosarcoma maydis (Corn smut fungus), this protein is Inosine triphosphate pyrophosphatase.